Consider the following 211-residue polypeptide: LexA repressor (211 aa).

Residues 35 to 55 (RAEIANFFGFKSANAAEEHLK) constitute a DNA-binding region (H-T-H motif). Catalysis depends on for autocatalytic cleavage activity residues Ser128 and Lys165.

This sequence belongs to the peptidase S24 family. Homodimer.

The enzyme catalyses Hydrolysis of Ala-|-Gly bond in repressor LexA.. Represses a number of genes involved in the response to DNA damage (SOS response), including recA and lexA. In the presence of single-stranded DNA, RecA interacts with LexA causing an autocatalytic cleavage which disrupts the DNA-binding part of LexA, leading to derepression of the SOS regulon and eventually DNA repair. The protein is LexA repressor of Colwellia psychrerythraea (strain 34H / ATCC BAA-681) (Vibrio psychroerythus).